A 158-amino-acid polypeptide reads, in one-letter code: 2-C-methyl-D-erythritol 2,4-cyclodiphosphate synthase (158 aa).

Residues D9 and H11 each coordinate a divalent metal cation. Residues 9–11 (DVH) and 35–36 (HS) contribute to the 4-CDP-2-C-methyl-D-erythritol 2-phosphate site. H43 contributes to the a divalent metal cation binding site. Residues 57 to 59 (DIG), 62 to 66 (FPDTD), 101 to 107 (AQKPKMA), 133 to 136 (TTTE), F140, and R143 each bind 4-CDP-2-C-methyl-D-erythritol 2-phosphate.

Belongs to the IspF family. In terms of assembly, homotrimer. Requires a divalent metal cation as cofactor.

The catalysed reaction is 4-CDP-2-C-methyl-D-erythritol 2-phosphate = 2-C-methyl-D-erythritol 2,4-cyclic diphosphate + CMP. The protein operates within isoprenoid biosynthesis; isopentenyl diphosphate biosynthesis via DXP pathway; isopentenyl diphosphate from 1-deoxy-D-xylulose 5-phosphate: step 4/6. In terms of biological role, involved in the biosynthesis of isopentenyl diphosphate (IPP) and dimethylallyl diphosphate (DMAPP), two major building blocks of isoprenoid compounds. Catalyzes the conversion of 4-diphosphocytidyl-2-C-methyl-D-erythritol 2-phosphate (CDP-ME2P) to 2-C-methyl-D-erythritol 2,4-cyclodiphosphate (ME-CPP) with a corresponding release of cytidine 5-monophosphate (CMP). The sequence is that of 2-C-methyl-D-erythritol 2,4-cyclodiphosphate synthase from Bacillus velezensis (strain DSM 23117 / BGSC 10A6 / LMG 26770 / FZB42) (Bacillus amyloliquefaciens subsp. plantarum).